The primary structure comprises 46 residues: Defensin Tk-AMP-D6.1 (46 aa).

Intrachain disulfides connect C3–C46, C14–C34, C20–C40, and C24–C42.

Functionally, plant defense peptide. In Triticum kiharae (Wheat), this protein is Defensin Tk-AMP-D6.1.